The sequence spans 596 residues: Invasin CotH7 (596 aa).

The N-terminal stretch at 1 to 17 (MKSLSFISLACLTAVHA) is a signal peptide. N-linked (GlcNAc...) asparagine glycosylation is found at Asn82, Asn146, Asn163, Asn169, Asn288, Asn440, and Asn544. Positions 528 to 544 (SATIAAPATSESASQDN) are enriched in low complexity. Positions 528–557 (SATIAAPATSESASQDNTSDDTDSASTSSS) are disordered. A lipid anchor (GPI-anchor amidated serine) is attached at Ser567. Positions 568-596 (SASKSAPTFYCLQLVLYLSLSFKNLYKYI) are cleaved as a propeptide — removed in mature form.

As to quaternary structure, interacts with host integrin beta-1 ITGB1 on the cell surface of host alveolar epithelial cells.

The protein resides in the cell membrane. Its function is as follows. Promotes invasion of host epithelial cells by adhering to receptors on the host cell surface to facilitate endocytosis of the pathogen into host cells. Probably binds integrin ITGA3:ITGB1 via ITGB1, on the cell surface of host alveolar epithelial cells. The protein is Invasin CotH7 of Rhizopus delemar (strain RA 99-880 / ATCC MYA-4621 / FGSC 9543 / NRRL 43880) (Mucormycosis agent).